The primary structure comprises 462 residues: ATP synthase subunit beta (462 aa).

150 to 157 (GGAGVGKT) lines the ATP pocket.

Belongs to the ATPase alpha/beta chains family. In terms of assembly, F-type ATPases have 2 components, CF(1) - the catalytic core - and CF(0) - the membrane proton channel. CF(1) has five subunits: alpha(3), beta(3), gamma(1), delta(1), epsilon(1). CF(0) has three main subunits: a(1), b(2) and c(9-12). The alpha and beta chains form an alternating ring which encloses part of the gamma chain. CF(1) is attached to CF(0) by a central stalk formed by the gamma and epsilon chains, while a peripheral stalk is formed by the delta and b chains.

It localises to the cell membrane. The enzyme catalyses ATP + H2O + 4 H(+)(in) = ADP + phosphate + 5 H(+)(out). In terms of biological role, produces ATP from ADP in the presence of a proton gradient across the membrane. The catalytic sites are hosted primarily by the beta subunits. In Wigglesworthia glossinidia brevipalpis, this protein is ATP synthase subunit beta.